The primary structure comprises 470 residues: MTELPDNTRWQLWIVAFGFFMQSLDTTIVNTALPSMAKSLGESPLHMHMVVVSYVLTVAVMLPASGWLADKIGVRNIFFAAIVLFTLGSLFCALSGTLNQLVLARVLQGVGGAMMVPVGRLTVMKIVPRAQYMAAMTFVTLPGQIGPLLGPALGGVLVEYASWHWIFLINIPVGIVGAMATFMLMPNYTIETRRFDLPGFLLLAIGMAVLTLALDGSKSMGISPWTLAGLAAGGAAAILLYLFHAKKSSGALFSLRLFRTPTFSLGLLGSFAGRIGSGMLPFMTPVFLQIGLGFSPFHAGLMMIPMVLGSMGMKRIVVQIVNRFGYRRVLVATTLGLALVSLLFMSVALLGWYYLLPLVLLLQGMVNSARFSSMNTLTLKDLPDTLASSGNSLLSMIMQLSMSIGVTIAGMLLGMFGQQHIGIDSSATHHVFMYTWLCMAVIIALPAIIFARVPNDTQQNMVISRRKRSL.

Topologically, residues 1 to 11 are periplasmic; it reads MTELPDNTRWQ. Residues 12 to 32 form a helical membrane-spanning segment; sequence LWIVAFGFFMQSLDTTIVNTA. Over 33–48 the chain is Cytoplasmic; the sequence is LPSMAKSLGESPLHMH. Residues 49–69 traverse the membrane as a helical segment; sequence MVVVSYVLTVAVMLPASGWLA. Over 70 to 76 the chain is Periplasmic; that stretch reads DKIGVRN. The chain crosses the membrane as a helical span at residues 77–97; the sequence is IFFAAIVLFTLGSLFCALSGT. Topologically, residues 98–101 are cytoplasmic; the sequence is LNQL. The helical transmembrane segment at 102–124 threads the bilayer; that stretch reads VLARVLQGVGGAMMVPVGRLTVM. Residues 125 to 137 are Periplasmic-facing; sequence KIVPRAQYMAAMT. The helical transmembrane segment at 138-158 threads the bilayer; that stretch reads FVTLPGQIGPLLGPALGGVLV. Over 159 to 164 the chain is Cytoplasmic; that stretch reads EYASWH. The chain crosses the membrane as a helical span at residues 165–185; it reads WIFLINIPVGIVGAMATFMLM. Topologically, residues 186–196 are periplasmic; it reads PNYTIETRRFD. A helical membrane pass occupies residues 197–217; sequence LPGFLLLAIGMAVLTLALDGS. At 218–224 the chain is on the cytoplasmic side; the sequence is KSMGISP. The chain crosses the membrane as a helical span at residues 225-245; the sequence is WTLAGLAAGGAAAILLYLFHA. At 246 to 262 the chain is on the periplasmic side; that stretch reads KKSSGALFSLRLFRTPT. The chain crosses the membrane as a helical span at residues 263-283; the sequence is FSLGLLGSFAGRIGSGMLPFM. Over 284–285 the chain is Cytoplasmic; it reads TP. Residues 286-306 traverse the membrane as a helical segment; sequence VFLQIGLGFSPFHAGLMMIPM. The Periplasmic portion of the chain corresponds to 307–341; the sequence is VLGSMGMKRIVVQIVNRFGYRRVLVATTLGLALVS. Residues 342–362 form a helical membrane-spanning segment; the sequence is LLFMSVALLGWYYLLPLVLLL. Residues 363-395 lie on the Cytoplasmic side of the membrane; sequence QGMVNSARFSSMNTLTLKDLPDTLASSGNSLLS. The helical transmembrane segment at 396-416 threads the bilayer; that stretch reads MIMQLSMSIGVTIAGMLLGMF. The Periplasmic segment spans residues 417 to 430; the sequence is GQQHIGIDSSATHH. The helical transmembrane segment at 431–451 threads the bilayer; it reads VFMYTWLCMAVIIALPAIIFA. The Cytoplasmic segment spans residues 452 to 470; that stretch reads RVPNDTQQNMVISRRKRSL.

The protein belongs to the major facilitator superfamily. TCR/Tet family.

It is found in the cell inner membrane. This is Putative multidrug resistance protein MdtD from Salmonella paratyphi A (strain ATCC 9150 / SARB42).